A 241-amino-acid chain; its full sequence is tRNA pseudouridine synthase B (241 aa).

The active-site Nucleophile is the Asp45.

Belongs to the pseudouridine synthase TruB family. Type 1 subfamily.

It catalyses the reaction uridine(55) in tRNA = pseudouridine(55) in tRNA. Functionally, responsible for synthesis of pseudouridine from uracil-55 in the psi GC loop of transfer RNAs. This chain is tRNA pseudouridine synthase B, found in Chlamydia trachomatis serovar L2 (strain ATCC VR-902B / DSM 19102 / 434/Bu).